A 203-amino-acid polypeptide reads, in one-letter code: Probable GTP-binding protein EngB (203 aa).

An EngB-type G domain is found at 22-195; it reads GIPEIALAGR…WEEIVNQYNQ (174 aa). Residues 30–37, 57–61, 75–78, 142–145, and 174–176 contribute to the GTP site; these read GRSNVGKS, GKTRT, DLPG, TKAD, and VSS. Mg(2+) is bound by residues Ser37 and Thr59.

It belongs to the TRAFAC class TrmE-Era-EngA-EngB-Septin-like GTPase superfamily. EngB GTPase family. Mg(2+) is required as a cofactor.

Its function is as follows. Necessary for normal cell division and for the maintenance of normal septation. The sequence is that of Probable GTP-binding protein EngB from Clostridioides difficile (strain 630) (Peptoclostridium difficile).